Reading from the N-terminus, the 354-residue chain is MKIKQVHVRASKIKLKETFTIALGTIESADSAIVEIETEEGLVGYGEGGPGIFITGETLAGTLETIELFGQAIIGLNPFNIEKIHEVMDKISAFAPAAKAAIDIACYDLMGQKAQLPLYQLLGGYDNQVITDITLGIDEPNVMAQKAVEKVKLGFDTLKIKVGTGIEADIARVKAIREAVGFDIKLRLDANQAWTPKDAVKAIQALADYQIELVEQPVKRRDLEGLKYVTSQVNTTIMADESCFDAQDALELVKKGTVDVINIKLMKCGGIHEALKINQICETAGIECMIGCMAEETTIGITAAAHLAAAQKNITRADLDATFGLETAPVTGGVSLEAKPLLELGEAAGLGISH.

Substrate contacts are provided by residues Thr-134, Lys-159, and 159–161 (KIK). Residue Asp-189 coordinates Mg(2+). Asn-191 is a binding site for substrate. Mg(2+)-binding residues include Glu-215 and Asp-240. Substrate is bound by residues Lys-264, 292–295 (CMAE), and 318–320 (DLD).

Belongs to the mandelate racemase/muconate lactonizing enzyme family. Mg(2+) is required as a cofactor.

Functionally, catalyzes the epimerization of L-Ile-L-Tyr to L-Ile-D-Tyr (in vitro). Catalyzes the epimerization of dipeptides, with a preference for substrates with a hydrophobic or basic amino acid in the first position, followed by an aromatic residue in the second position. Has epimerase activity with L-Ile-L-Tyr, L-Val-L-Tyr and L-Arg-L-Tyr (in vitro). This chain is Hydrophobic dipeptide epimerase, found in Enterococcus faecalis (strain ATCC 700802 / V583).